Reading from the N-terminus, the 145-residue chain is Superoxide dismutase [Mn/Fe] (145 aa).

Positions 10 and 64 each coordinate Fe(3+). Mn(2+)-binding residues include His10 and His64.

The protein belongs to the iron/manganese superoxide dismutase family. It depends on Mn(2+) as a cofactor. Fe(3+) is required as a cofactor.

The enzyme catalyses 2 superoxide + 2 H(+) = H2O2 + O2. Functionally, destroys superoxide anion radicals which are normally produced within the cells and which are toxic to biological systems. Catalyzes the dismutation of superoxide anion radicals into O2 and H2O2 by successive reduction and oxidation of the transition metal ion at the active site. The chain is Superoxide dismutase [Mn/Fe] (sodA) from Streptococcus alactolyticus.